The primary structure comprises 108 residues: Small ribosomal subunit protein eS25w (108 aa).

The disordered stretch occupies residues 1-36 (MAPKKDKVPPPSSKPAKSGGGKQKKKKWSKGKQKEK). The span at 22–31 (KQKKKKWSKG) shows a compositional bias: basic residues.

The protein belongs to the eukaryotic ribosomal protein eS25 family.

The chain is Small ribosomal subunit protein eS25w (RPS25E) from Arabidopsis thaliana (Mouse-ear cress).